The sequence spans 320 residues: MRALALAVVAMAVVAVRGEQCGSQAGGALCPNCLCCSQYGWCGSTSDYCGAGCQSQCSGGCGGGPTPPSSGGGSGVASIISPSLFDQMLLHRNDQACAAKGFYTYDAFVAAANAYPDFATTGDADTCKREVAAFLAQTSHETTGGWPTAPDGPYSWGYCFKEENNGNAPTYCEPKPEWPCAAGKKYYGRGPIQITYNYNYGPAGQAIGSDLLNNPDLVASDATVSFKTAFWFWMTPQSPKPSCHAVITGQWTPSADDQAAGRVPGYGEITNIINGGVECGHGADDKVADRIGFYKRYCDMLGVSYGDNLDCYNQRPYPPS.

Positions 1–18 (MRALALAVVAMAVVAVRG) are cleaved as a signal peptide. The Chitin-binding type-1 domain maps to 19 to 59 (EQCGSQAGGALCPNCLCCSQYGWCGSTSDYCGAGCQSQCSG). 8 disulfides stabilise this stretch: Cys-21–Cys-36, Cys-30–Cys-42, Cys-33–Cys-61, Cys-35–Cys-49, Cys-53–Cys-57, Cys-97–Cys-159, Cys-172–Cys-180, and Cys-279–Cys-311. Residue Glu-141 is the Proton donor of the active site.

It belongs to the glycosyl hydrolase 19 family. Chitinase class I subfamily. As to expression, expressed at low levels in roots, leaves, sheaths and meristems.

It catalyses the reaction Random endo-hydrolysis of N-acetyl-beta-D-glucosaminide (1-&gt;4)-beta-linkages in chitin and chitodextrins.. Functionally, hydrolyzes chitin and plays a role in defense against fungal pathogens containing chitin. Inhibits the growth of T.reesei fungus on plate assay. The sequence is that of Chitinase 3 (Cht3) from Oryza sativa subsp. japonica (Rice).